A 211-amino-acid chain; its full sequence is 2,3-bisphosphoglycerate-dependent phosphoglycerate mutase (211 aa).

Substrate is bound by residues 9 to 16 (RHGQSDWN), 22 to 23 (TG), arginine 61, 88 to 91 (ERDY), lysine 99, 115 to 116 (RR), and 159 to 160 (GN). Catalysis depends on histidine 10, which acts as the Tele-phosphohistidine intermediate. The active-site Proton donor/acceptor is glutamate 88.

The protein belongs to the phosphoglycerate mutase family. BPG-dependent PGAM subfamily. Homodimer.

The enzyme catalyses (2R)-2-phosphoglycerate = (2R)-3-phosphoglycerate. It participates in carbohydrate degradation; glycolysis; pyruvate from D-glyceraldehyde 3-phosphate: step 3/5. Functionally, catalyzes the interconversion of 2-phosphoglycerate and 3-phosphoglycerate. The protein is 2,3-bisphosphoglycerate-dependent phosphoglycerate mutase of Rhizobium etli (strain CIAT 652).